Here is a 1219-residue protein sequence, read N- to C-terminus: NHS-like protein 2 (1219 aa).

Disordered stretches follow at residues F162–K181, F288–P321, F336–P364, T400–W423, G474–L591, Q669–V741, G854–S938, I979–S1003, L1033–A1087, and W1121–N1197. Residues F288–S312 show a composition bias toward polar residues. Residues G352–P364 are compositionally biased toward basic and acidic residues. Phosphoserine is present on S499. Positions A526–E545 are enriched in polar residues. Over residues R549–P567 the composition is skewed to basic residues. At S575 the chain carries Phosphoserine. Residues S674 to S687 show a composition bias toward low complexity. A Phosphoserine modification is found at S690. Composition is skewed to polar residues over residues M708 to L729 and T897 to S908. A Phosphoserine modification is found at S1048. Positions A1076–A1087 are enriched in basic and acidic residues. The span at S1131–D1144 shows a compositional bias: polar residues. Residues S1145–A1160 show a composition bias toward low complexity. A Phosphoserine modification is found at S1208.

The protein belongs to the NHS family.

The protein is NHS-like protein 2 of Mus musculus (Mouse).